The chain runs to 102 residues: Simukunin (102 aa).

A signal peptide spans 1-19 (MNILPISAFFLLYLGHSLA). The BPTI/Kunitz inhibitor domain maps to 24–74 (CNLPVDEGVCRALFKRFYYEPATDSCKEFYYGGCEGNGNRFKSKKECILKC). Disulfide bonds link Cys-24-Cys-74, Cys-33-Cys-57, and Cys-49-Cys-70. The segment covering 83–92 (TRKRKPKKTT) has biased composition (basic residues). The disordered stretch occupies residues 83–102 (TRKRKPKKTTKPPIPIISLD).

This sequence belongs to the venom Kunitz-type family. Interacts with mouse, bovine and human coagulation factor X (F10) (activated). Interacts with host elastase. As to expression, salivary gland (at protein level). Not detected in female carcass without head and salivary glands. Not detected in males.

It localises to the secreted. Its function is as follows. Salivary anticoagulant that inhibits plasma clotting in the host. Strongly inhibits host elastase, coagulation factors Xa (F10) and cathepsin G (CTSG). Inhibits host plasmin (PLG), kallikrein, trypsin, beta-tryptase and coagulation factor XIa (F11). The polypeptide is Simukunin (Simulium vittatum (Striped black fly)).